A 501-amino-acid polypeptide reads, in one-letter code: Serine/threonine-protein kinase pelle (501 aa).

The tract at residues 1–25 (MSGVQTAEAEAQAQNQANGNRTRSR) is disordered. The span at 7–18 (AEAEAQAQNQAN) shows a compositional bias: low complexity. The 67-residue stretch at 55 to 121 (WQQLATAVKL…NAMRLIKDYV (67 aa)) folds into the Death domain. Residues 144-176 (DSSAKVNNGPPFPSSSGVSNSNNNRTSTTATEE) are disordered. The segment covering 149 to 167 (VNNGPPFPSSSGVSNSNNN) has biased composition (low complexity). The Protein kinase domain maps to 213–499 (WSPDNRLGQG…AVLKRFEPFV (287 aa)). Residues 219 to 227 (LGQGGFGDV) and lysine 240 each bind ATP. Residue aspartate 346 is the Proton acceptor of the active site. ATP-binding positions include 348-351 (KPAN) and aspartate 364.

It belongs to the protein kinase superfamily. TKL Ser/Thr protein kinase family. Pelle subfamily. Interacts (via Death domain) with tub (via Death domain). Interacts with Pellino (Pli).

It localises to the cell membrane. Its subcellular location is the cytoplasm. It catalyses the reaction L-seryl-[protein] + ATP = O-phospho-L-seryl-[protein] + ADP + H(+). The enzyme catalyses L-threonyl-[protein] + ATP = O-phospho-L-threonyl-[protein] + ADP + H(+). Functionally, plays an essential role in the Tl receptor signaling pathway that establishes embryonic dorsoventral polarity; the signal directs import of dl into ventral and ventrolateral nuclei, thereby establishing dorsoventral polarity. Tub recruits pll to the plasma membrane and protein-protein interaction activates pll. This is Serine/threonine-protein kinase pelle (pll) from Drosophila melanogaster (Fruit fly).